Reading from the N-terminus, the 824-residue chain is Type IV secretion system protein PtlC homolog (824 aa).

456–463 serves as a coordination point for ATP; the sequence is GQSGSGKT.

Belongs to the TrbE/VirB4 family.

The protein resides in the cell membrane. The chain is Type IV secretion system protein PtlC homolog (ptlC) from Bordetella bronchiseptica (strain ATCC BAA-588 / NCTC 13252 / RB50) (Alcaligenes bronchisepticus).